Here is a 467-residue protein sequence, read N- to C-terminus: Dimethylamine methyltransferase MtbB1 (467 aa).

Position 356 (pyrrolysine 356) is a non-standard amino acid, pyrrolysine.

Belongs to the dimethylamine methyltransferase family.

It catalyses the reaction Co(I)-[dimethylamine-specific corrinoid protein] + dimethylamine + H(+) = methyl-Co(III)-[dimethylamine-specific corrinoid protein] + methylamine. It functions in the pathway one-carbon metabolism; methanogenesis from dimethylamine. Its function is as follows. Catalyzes the transfer of a methyl group from dimethylamine to the corrinoid cofactor of MtbC. In Methanosarcina barkeri (strain Fusaro / DSM 804), this protein is Dimethylamine methyltransferase MtbB1 (mtbB1).